A 576-amino-acid chain; its full sequence is Vacuolar protein sorting-associated protein vps5 (576 aa).

2 disordered regions span residues 1 to 60 (MLGH…PRKR) and 156 to 198 (DAAS…APQS). A Phosphothreonine modification is found at Thr55. Positions 156 to 169 (DAASSSAPNFTHTV) are enriched in polar residues. Low complexity predominate over residues 170-181 (SSASSQKQGSTS). The PX domain maps to 200 to 317 (TPFYIQVHDP…KLFLEAETFD (118 aa)). Residues Arg244, Lys270, and Arg284 each contribute to the a 1,2-diacyl-sn-glycero-3-phospho-(1D-myo-inositol-3-phosphate) site. Phosphoserine is present on Ser332.

The protein belongs to the sorting nexin family. In terms of assembly, component of the retromer complex which consists of vps29, vps26, vps35, vps5 and vps17.

The protein localises to the cytoplasm. The protein resides in the golgi apparatus. It localises to the membrane. Functionally, required for efficient sporulation target of PtdIns(3)P in vesicle transport required for onset of the forespore membrane formation. Its function is as follows. Plays a role in vesicular protein sorting. Required for the endosome-to-Golgi retrieval of the vacuolar protein sorting receptor pep1/vps10. Component of the membrane-associated retromer complex which is essential in endosome-to-Golgi retrograde transport. The vps29-vps26-vps35 subcomplex may be involved in cargo selection. This chain is Vacuolar protein sorting-associated protein vps5 (vps5), found in Schizosaccharomyces pombe (strain 972 / ATCC 24843) (Fission yeast).